The primary structure comprises 260 residues: Cytosolic Fe-S cluster assembly factor Nubp2 homolog (260 aa).

ATP is bound at residue 14 to 21 (GKGGVGKS). [4Fe-4S] cluster contacts are provided by cysteine 188 and cysteine 191.

It belongs to the Mrp/NBP35 ATP-binding proteins family. NUBP2/CFD1 subfamily. In terms of assembly, heterotetramer of 2 Nubp1 and 2 Nubp2 chains. [4Fe-4S] cluster is required as a cofactor.

Its subcellular location is the cytoplasm. Its function is as follows. Component of the cytosolic iron-sulfur (Fe/S) protein assembly (CIA) machinery. Required for maturation of extramitochondrial Fe-S proteins. The Nubp1-Nubp2 heterotetramer forms a Fe-S scaffold complex, mediating the de novo assembly of an Fe-S cluster and its transfer to target apoproteins. The sequence is that of Cytosolic Fe-S cluster assembly factor Nubp2 homolog from Drosophila sechellia (Fruit fly).